A 287-amino-acid polypeptide reads, in one-letter code: Large ribosomal subunit protein uL2 (287 aa).

Positions 216–287 are disordered; the sequence is RRPEVRGSVM…SKRGRGGRDA (72 aa). Positions 271-287 are enriched in basic residues; it reads QRRRRKSSKRGRGGRDA.

The protein belongs to the universal ribosomal protein uL2 family. Part of the 50S ribosomal subunit. Forms a bridge to the 30S subunit in the 70S ribosome.

Its function is as follows. One of the primary rRNA binding proteins. Required for association of the 30S and 50S subunits to form the 70S ribosome, for tRNA binding and peptide bond formation. It has been suggested to have peptidyltransferase activity; this is somewhat controversial. Makes several contacts with the 16S rRNA in the 70S ribosome. The chain is Large ribosomal subunit protein uL2 from Synechococcus sp. (strain ATCC 27144 / PCC 6301 / SAUG 1402/1) (Anacystis nidulans).